The following is a 126-amino-acid chain: Small ribosomal subunit protein uS11 (126 aa).

Belongs to the universal ribosomal protein uS11 family. Part of the 30S ribosomal subunit.

Located on the platform of the 30S subunit. The chain is Small ribosomal subunit protein uS11 from Methanosarcina acetivorans (strain ATCC 35395 / DSM 2834 / JCM 12185 / C2A).